A 91-amino-acid polypeptide reads, in one-letter code: Small ribosomal subunit protein uS19 (91 aa).

The protein belongs to the universal ribosomal protein uS19 family.

Protein S19 forms a complex with S13 that binds strongly to the 16S ribosomal RNA. This Mycoplasmopsis pulmonis (strain UAB CTIP) (Mycoplasma pulmonis) protein is Small ribosomal subunit protein uS19 (rpsS).